Reading from the N-terminus, the 229-residue chain is ATP synthase subunit a (229 aa).

The next 6 helical transmembrane spans lie at 25–45 (ADAV…SIAA), 82–102 (FFPL…IGLI), 104–124 (GFFP…VVFV), 142–162 (FLGP…IGHL), 181–201 (LVLI…MMLM), and 202–222 (GVLV…IYIQ).

The protein belongs to the ATPase A chain family. F-type ATPases have 2 components, CF(1) - the catalytic core - and CF(0) - the membrane proton channel. CF(1) has five subunits: alpha(3), beta(3), gamma(1), delta(1), epsilon(1). CF(0) has three main subunits: a(1), b(2) and c(9-12). The alpha and beta chains form an alternating ring which encloses part of the gamma chain. CF(1) is attached to CF(0) by a central stalk formed by the gamma and epsilon chains, while a peripheral stalk is formed by the delta and b chains.

Its subcellular location is the cell inner membrane. Functionally, key component of the proton channel; it plays a direct role in the translocation of protons across the membrane. This Geobacter sp. (strain M21) protein is ATP synthase subunit a.